Consider the following 466-residue polypeptide: UDP-N-acetylmuramoylalanine--D-glutamate ligase (466 aa).

121–127 (GTNGKST) serves as a coordination point for ATP.

The protein belongs to the MurCDEF family.

It localises to the cytoplasm. The catalysed reaction is UDP-N-acetyl-alpha-D-muramoyl-L-alanine + D-glutamate + ATP = UDP-N-acetyl-alpha-D-muramoyl-L-alanyl-D-glutamate + ADP + phosphate + H(+). It participates in cell wall biogenesis; peptidoglycan biosynthesis. Its function is as follows. Cell wall formation. Catalyzes the addition of glutamate to the nucleotide precursor UDP-N-acetylmuramoyl-L-alanine (UMA). This is UDP-N-acetylmuramoylalanine--D-glutamate ligase from Rhodopseudomonas palustris (strain HaA2).